A 276-amino-acid polypeptide reads, in one-letter code: tRNA (guanine-N(7)-)-methyltransferase (276 aa).

Residues Met-1 to Arg-36 are disordered. N-acetylalanine is present on Ala-2. A Phosphoserine; by PKB/AKT1 and RPS6KA3 modification is found at Ser-27. The S-adenosyl-L-homocysteine site is built by Gly-84, Glu-107, Ile-108, Arg-109, Asn-140, Ala-141, and Leu-160. Residues Gly-84 and Glu-107 each contribute to the S-adenosyl-L-methionine site. S-adenosyl-L-methionine contacts are provided by Arg-109, Asn-140, Ala-141, and Leu-160. Asp-163 is a catalytic residue. The alphaC helix stretch occupies residues Pro-164–Lys-172. S-adenosyl-L-homocysteine contacts are provided by Thr-238 and Glu-240. Residues Thr-238 and Glu-240 each contribute to the S-adenosyl-L-methionine site. The segment at Thr-238 to Arg-246 is alpha6 helix.

It belongs to the class I-like SAM-binding methyltransferase superfamily. TrmB family. As to quaternary structure, catalytic component of the METTL1-WDR4 complex, composed of METTL1 and WDR4. Phosphorylation at Ser-27 by PKB/AKT1 inactivates its methyltransferase activity via a steric interference mechanism in the active site that locally disrupts the catalytic center. Phosphorylation at Ser-27 does not affect the interaction with WDR4. As to expression, ubiquitous.

It localises to the nucleus. It carries out the reaction guanosine(46) in tRNA + S-adenosyl-L-methionine = N(7)-methylguanosine(46) in tRNA + S-adenosyl-L-homocysteine. The catalysed reaction is a guanosine in mRNA + S-adenosyl-L-methionine = an N(7)-methylguanosine in mRNA + S-adenosyl-L-homocysteine. The enzyme catalyses a guanosine in miRNA + S-adenosyl-L-methionine = an N(7)-methylguanosine in miRNA + S-adenosyl-L-homocysteine. It functions in the pathway tRNA modification; N(7)-methylguanine-tRNA biosynthesis. Functionally, catalytic component of METTL1-WDR4 methyltransferase complex that mediates the formation of N(7)-methylguanine in a subset of RNA species, such as tRNAs, mRNAs and microRNAs (miRNAs). Catalyzes the formation of N(7)-methylguanine at position 46 (m7G46) in a large subset of tRNAs that contain the 5'-RAGGU-3' motif within the variable loop. M7G46 interacts with C13-G22 in the D-loop to stabilize tRNA tertiary structure and protect tRNAs from decay. Also acts as a methyltransferase for a subset of internal N(7)-methylguanine in mRNAs. Internal N(7)-methylguanine methylation of mRNAs in response to stress promotes their relocalization to stress granules, thereby suppressing their translation. Also methylates a specific subset of miRNAs, such as let-7. N(7)-methylguanine methylation of let-7 miRNA promotes let-7 miRNA processing by disrupting an inhibitory secondary structure within the primary miRNA transcript (pri-miRNA). Acts as a regulator of embryonic stem cell self-renewal and differentiation. The sequence is that of tRNA (guanine-N(7)-)-methyltransferase from Homo sapiens (Human).